A 565-amino-acid chain; its full sequence is Thiol:disulfide interchange protein DsbD (565 aa).

An N-terminal signal peptide occupies residues 1–19 (MAQRIFTLILLLCSTSVFA). Disulfide bonds link Cys122–Cys128 and Cys182–Cys304. A run of 7 helical transmembrane segments spans residues 163 to 183 (LPFSALWALLIGIGIAFTPCV), 208 to 228 (LLTFIYVQGMALTYTALGLVV), 243 to 263 (YVLIGLAIVFTLLAMSMFGLF), 289 to 309 (GVFIMGAIAGLICSPCTTAPL), 323 to 343 (WLGGGTLYLYALGMGLPLMLI), 357 to 377 (WMEQVKTAFGFVILALPVFLL), and 384 to 404 (IWGLRLWSALGVAFFGWAFIT). The Thioredoxin domain occupies 434–565 (WAFGETHTAQ…FSAHLRDRQP (132 aa)). Residues Cys480 and Cys483 are joined by a disulfide bond.

It belongs to the thioredoxin family. DsbD subfamily.

It localises to the cell inner membrane. The catalysed reaction is [protein]-dithiol + NAD(+) = [protein]-disulfide + NADH + H(+). It carries out the reaction [protein]-dithiol + NADP(+) = [protein]-disulfide + NADPH + H(+). Required to facilitate the formation of correct disulfide bonds in some periplasmic proteins and for the assembly of the periplasmic c-type cytochromes. Acts by transferring electrons from cytoplasmic thioredoxin to the periplasm. This transfer involves a cascade of disulfide bond formation and reduction steps. This is Thiol:disulfide interchange protein DsbD from Escherichia coli O6:K15:H31 (strain 536 / UPEC).